The chain runs to 408 residues: Sex comb on midleg-like protein 4 (408 aa).

Residues serine 55 and serine 65 each carry the phosphoserine modification. The segment at 274–338 (AGGPATTTSG…TRRPSSRNPS (65 aa)) is disordered. A compositionally biased stretch (polar residues) spans 278 to 287 (ATTTSGSRTN). The span at 288-306 (PVPSGGSSSPGLRLPASSP) shows a compositional bias: low complexity. Residues 340 to 406 (WTVEDVVRFV…CYHIDKLKQA (67 aa)) enclose the SAM domain.

It belongs to the SCM family.

The protein resides in the nucleus. Its function is as follows. Putative Polycomb group (PcG) protein. PcG proteins act by forming multiprotein complexes, which are required to maintain the transcriptionally repressive state of homeotic genes throughout development. The chain is Sex comb on midleg-like protein 4 (Scml4) from Mus musculus (Mouse).